The chain runs to 103 residues: Ribonuclease VapC14 (103 aa).

One can recognise a PINc domain in the interval 3 to 74 (YVLDTNVVSA…WFDDKVLRIF (72 aa)). Mg(2+) is bound at residue Asp6.

This sequence belongs to the PINc/VapC protein family. Requires Mg(2+) as cofactor.

Its function is as follows. Toxic component of a type II toxin-antitoxin (TA) system. An RNase. The cognate antitoxin is VapB14. The polypeptide is Ribonuclease VapC14 (vapC14) (Mycobacterium tuberculosis (strain CDC 1551 / Oshkosh)).